We begin with the raw amino-acid sequence, 538 residues long: Phospho-2-dehydro-3-deoxyheptonate aldolase 1, chloroplastic (538 aa).

Residues 1–74 (MALSSTSTTN…KPSKSSPPAA (74 aa)) constitute a chloroplast transit peptide. The disordered stretch occupies residues 55-82 (DSNKIPIVSDKPSKSSPPAATATTAPAP). Low complexity predominate over residues 68-82 (KSSPPAATATTAPAP). Thr75 bears the Blocked amino end (Thr) mark.

This sequence belongs to the class-II DAHP synthase family.

The protein localises to the plastid. The protein resides in the chloroplast. The catalysed reaction is D-erythrose 4-phosphate + phosphoenolpyruvate + H2O = 7-phospho-2-dehydro-3-deoxy-D-arabino-heptonate + phosphate. Its pathway is metabolic intermediate biosynthesis; chorismate biosynthesis; chorismate from D-erythrose 4-phosphate and phosphoenolpyruvate: step 1/7. Activation by tryptophan (a hysteretic factor). The sequence is that of Phospho-2-dehydro-3-deoxyheptonate aldolase 1, chloroplastic (SHKA) from Solanum tuberosum (Potato).